The primary structure comprises 371 residues: 4-hydroxy-3-methylbut-2-en-1-yl diphosphate synthase (flavodoxin) (371 aa).

Residues cysteine 270, cysteine 273, cysteine 305, and glutamate 312 each contribute to the [4Fe-4S] cluster site.

The protein belongs to the IspG family. [4Fe-4S] cluster serves as cofactor.

The catalysed reaction is (2E)-4-hydroxy-3-methylbut-2-enyl diphosphate + oxidized [flavodoxin] + H2O + 2 H(+) = 2-C-methyl-D-erythritol 2,4-cyclic diphosphate + reduced [flavodoxin]. The protein operates within isoprenoid biosynthesis; isopentenyl diphosphate biosynthesis via DXP pathway; isopentenyl diphosphate from 1-deoxy-D-xylulose 5-phosphate: step 5/6. Converts 2C-methyl-D-erythritol 2,4-cyclodiphosphate (ME-2,4cPP) into 1-hydroxy-2-methyl-2-(E)-butenyl 4-diphosphate. The chain is 4-hydroxy-3-methylbut-2-en-1-yl diphosphate synthase (flavodoxin) from Shewanella sp. (strain W3-18-1).